We begin with the raw amino-acid sequence, 907 residues long: Protein translocase subunit SecA (907 aa).

ATP-binding positions include glutamine 87, 105 to 109 (GEGKT), and aspartate 510. 4 residues coordinate Zn(2+): cysteine 892, cysteine 894, cysteine 903, and histidine 904.

Belongs to the SecA family. Monomer and homodimer. Part of the essential Sec protein translocation apparatus which comprises SecA, SecYEG and auxiliary proteins SecDF-YajC and YidC. Zn(2+) is required as a cofactor.

It is found in the cell inner membrane. The protein localises to the cytoplasm. It catalyses the reaction ATP + H2O + cellular proteinSide 1 = ADP + phosphate + cellular proteinSide 2.. Its function is as follows. Part of the Sec protein translocase complex. Interacts with the SecYEG preprotein conducting channel. Has a central role in coupling the hydrolysis of ATP to the transfer of proteins into and across the cell membrane, serving both as a receptor for the preprotein-SecB complex and as an ATP-driven molecular motor driving the stepwise translocation of polypeptide chains across the membrane. This is Protein translocase subunit SecA from Acinetobacter baumannii (strain ACICU).